Here is a 424-residue protein sequence, read N- to C-terminus: Hemagglutinin-esterase (424 aa).

The signal sequence occupies residues 1 to 16 (MFLLPRFVLVSCIIGS). Positions 7–127 (FVLVSCIIGS…SNDIWMQNKG (121 aa)) are esterase domain 1. Over 17 to 392 (LGFDNPPTNV…PICVYDPLPI (376 aa)) the chain is Virion surface. Ser40 (nucleophile) is an active-site residue. An intrachain disulfide couples Cys44 to Cys65. Asn54, Asn89, Asn153, Asn236, and Asn301 each carry an N-linked (GlcNAc...) asparagine; by host glycan. Disulfide bonds link Cys113-Cys162, Cys197-Cys276, and Cys205-Cys249. The receptor binding stretch occupies residues 128–266 (LFYTQVYKNM…GNYLAISNEL (139 aa)). The esterase domain 2 stretch occupies residues 267–379 (LLTVPTKAIC…RCPTAADINT (113 aa)). An intrachain disulfide couples Cys307 to Cys312. Residue Asn316 is glycosylated (N-linked (GlcNAc...) asparagine; by host). Catalysis depends on charge relay system residues Asp326 and His329. The cysteines at positions 347 and 371 are disulfide-linked. N-linked (GlcNAc...) asparagine; by host glycosylation occurs at Asn358. A helical membrane pass occupies residues 393–413 (ILLGILLGVAVIIIVVLLLYF). Over 414-424 (MVDNGTRLHDA) the chain is Intravirion. Residue Asn417 is glycosylated (N-linked (GlcNAc...) asparagine; by host).

The protein belongs to the influenza type C/coronaviruses hemagglutinin-esterase family. Homodimer; disulfide-linked. Forms a complex with the M protein in the pre-Golgi. Associates then with S-M complex to form a ternary complex S-M-HE. N-glycosylated in the RER. In terms of processing, N-glycosylated in the host RER.

It is found in the virion membrane. The protein localises to the host cell membrane. It carries out the reaction N-acetyl-9-O-acetylneuraminate + H2O = N-acetylneuraminate + acetate + H(+). The catalysed reaction is N-acetyl-4-O-acetylneuraminate + H2O = N-acetylneuraminate + acetate + H(+). Its function is as follows. Structural protein that makes short spikes at the surface of the virus. Contains receptor binding and receptor-destroying activities. Mediates de-O-acetylation of N-acetyl-4-O-acetylneuraminic acid, which is probably the receptor determinant recognized by the virus on the surface of erythrocytes and susceptible cells. This receptor-destroying activity is important for virus release as it probably helps preventing self-aggregation and ensures the efficient spread of the progeny virus from cell to cell. May serve as a secondary viral attachment protein for initiating infection, the spike protein being the major one. May become a target for both the humoral and the cellular branches of the immune system. The protein is Hemagglutinin-esterase of Bovine coronavirus (strain 98TXSF-110-ENT) (BCoV-ENT).